The chain runs to 334 residues: Antho-RFamide neuropeptides (334 aa).

The first 26 residues, 1-26 (MLVAMTTASYVTILVTLLFHILTINA), serve as a signal peptide directing secretion. Residues 27–116 (KTVTKRAKET…REFQGRFGRE (90 aa)) constitute a propeptide that is removed on maturation. Basic and acidic residues-rich tracts occupy residues 115–289 (REQG…RELL) and 303–334 (PQTR…ANKS). Positions 115–334 (REQGRFGREE…ESNDEEANKS (220 aa)) are disordered. At Phe120 the chain carries Phenylalanine amide. The propeptide occupies 122–125 (REED). Phe129 carries the phenylalanine amide modification. The propeptide occupies 131–134 (REED). Residue Phe138 is modified to Phenylalanine amide. The propeptide occupies 140–142 (REE). Residue Phe146 is modified to Phenylalanine amide. The propeptide occupies 148–151 (REED). Phe155 carries the phenylalanine amide modification. Positions 157–160 (REED) are excised as a propeptide. A Phenylalanine amide modification is found at Phe164. Positions 166–169 (REED) are excised as a propeptide. Phenylalanine amide is present on Phe173. Residues 175 to 178 (REEE) constitute a propeptide that is removed on maturation. Phe182 carries the post-translational modification Phenylalanine amide. Positions 184–187 (REED) are excised as a propeptide. Residue Phe191 is modified to Phenylalanine amide. The propeptide occupies 193 to 196 (REEE). Phe200 carries the post-translational modification Phenylalanine amide. Residues 202–205 (REED) constitute a propeptide that is removed on maturation. A Phenylalanine amide modification is found at Phe209. Positions 211–214 (REED) are excised as a propeptide. Phe218 carries the phenylalanine amide modification. Residues 220-223 (REEE) constitute a propeptide that is removed on maturation. Phe227 is modified (phenylalanine amide). The propeptide occupies 229-233 (KRDED). Phe237 carries the post-translational modification Phenylalanine amide. The propeptide occupies 239-242 (KRED). Phe246 bears the Phenylalanine amide mark. The propeptide occupies 248–252 (KRDED). Phe256 carries the phenylalanine amide modification. Positions 258–262 (KRDED) are excised as a propeptide. At Phe266 the chain carries Phenylalanine amide. The propeptide occupies 268–271 (KRED). Phe275 carries the phenylalanine amide modification. A propeptide spanning residues 277 to 280 (KRED) is cleaved from the precursor. Phe284 bears the Phenylalanine amide mark. Residues 286–334 (RELLAKLNKRTTSIQEDPQTRFRDVQMTRRNVAKKDKIEESNDEEANKS) constitute a propeptide that is removed on maturation.

Belongs to the FARP (FMRFamide related peptide) family. As to expression, neurons associated with smooth muscle fibers.

It is found in the secreted. In terms of biological role, not known but it could act as a transmitter at neuromuscular synapses. This Calliactis parasitica (Sea anemone) protein is Antho-RFamide neuropeptides.